The following is a 355-amino-acid chain: Protein pelota homolog (355 aa).

This sequence belongs to the eukaryotic release factor 1 family. Pelota subfamily. Monomer. A divalent metal cation is required as a cofactor.

Its subcellular location is the cytoplasm. Its function is as follows. May function in recognizing stalled ribosomes, interact with stem-loop structures in stalled mRNA molecules, and effect endonucleolytic cleavage of the mRNA. May play a role in the release non-functional ribosomes and degradation of damaged mRNAs. Has endoribonuclease activity. This is Protein pelota homolog from Halorubrum lacusprofundi (strain ATCC 49239 / DSM 5036 / JCM 8891 / ACAM 34).